Consider the following 432-residue polypeptide: Putative D-alanyl-D-alanine carboxypeptidase (432 aa).

A helical; Signal-anchor membrane pass occupies residues 7 to 25; the sequence is ATVLLTFSLSAFAVEYPVL.

Belongs to the peptidase S12 family. YfeW subfamily.

The protein localises to the cell inner membrane. It carries out the reaction Preferential cleavage: (Ac)2-L-Lys-D-Ala-|-D-Ala. Also transpeptidation of peptidyl-alanyl moieties that are N-acyl substituents of D-alanine.. This is Putative D-alanyl-D-alanine carboxypeptidase from Salmonella heidelberg (strain SL476).